Here is a 443-residue protein sequence, read N- to C-terminus: Protein king tubby (443 aa).

Disordered stretches follow at residues 57 to 85 (TNGSPGGITPVAVNTSRNHSNNMRSLSTI) and 98 to 189 (HELE…ESEG). Residues 68-85 (AVNTSRNHSNNMRSLSTI) show a composition bias toward polar residues. A compositionally biased stretch (low complexity) spans 113–128 (QHQQSASHSANSTQSQ). The residue at position 136 (serine 136) is a Phosphoserine. Residues 148–160 (NRNVAAAAPVRPA) show a composition bias toward low complexity. Residues 177–186 (NGTGNGTGGE) are compositionally biased toward gly residues.

It belongs to the TUB family.

It is found in the cytoplasm. The protein localises to the nucleus. It localises to the cell projection. The protein resides in the cilium membrane. Its subcellular location is the rhabdomere. This chain is Protein king tubby, found in Drosophila yakuba (Fruit fly).